A 271-amino-acid chain; its full sequence is Dihydropteroate synthase type-2 (271 aa).

The Pterin-binding domain maps to 1-259; that stretch reads MNKSLIIFGI…EPRPLRDGLA (259 aa). A 4-aminobenzoate-binding site is contributed by Asn-12. Asn-12, Phe-18, Ser-51, and Ser-52 together coordinate diphosphate. Asn-12 contributes to the Mg(2+) binding site. Residues Ser-52, Asp-85, Asn-104, Asp-174, Phe-179, Lys-213, and Ser-214 each coordinate 7,8-dihydropteroate. (7,8-dihydropterin-6-yl)methyl diphosphate-binding residues include Asp-85, Asn-104, and Asp-174. 6-hydroxymethyl-7,8-dihydropterin-binding residues include Asn-104 and Asp-174. Residue Lys-213 coordinates (7,8-dihydropterin-6-yl)methyl diphosphate. Lys-213 provides a ligand contact to 6-hydroxymethyl-7,8-dihydropterin. Arg-247 serves as a coordination point for 4-aminobenzoate. Diphosphate-binding residues include Arg-247 and His-249. 247–249 contributes to the (7,8-dihydropterin-6-yl)methyl diphosphate binding site; it reads RTH.

Belongs to the DHPS family. In terms of assembly, homodimer. The cofactor is Mg(2+).

It carries out the reaction (7,8-dihydropterin-6-yl)methyl diphosphate + 4-aminobenzoate = 7,8-dihydropteroate + diphosphate. It functions in the pathway cofactor biosynthesis; tetrahydrofolate biosynthesis; 7,8-dihydrofolate from 2-amino-4-hydroxy-6-hydroxymethyl-7,8-dihydropteridine diphosphate and 4-aminobenzoate: step 1/2. Functionally, catalyzes the condensation of para-aminobenzoate (pABA) with 6-hydroxymethyl-7,8-dihydropterin diphosphate (DHPt-PP) to form 7,8-dihydropteroate (H2Pte), the immediate precursor of folate derivatives. Confers resistance to sulfonamide antibiotics, including sulfamethoxazole (SMX), sulfadiazine and sulfisoxazole. The type II enzyme is stable whereas type I DHPS loses its activity rapidly. The polypeptide is Dihydropteroate synthase type-2 (Escherichia coli).